Consider the following 267-residue polypeptide: Oxidoreductase ordB (267 aa).

This sequence belongs to the avfA family.

It functions in the pathway mycotoxin biosynthesis. Its function is as follows. Oxidoreductase; part of the fragmented gene cluster that mediates the biosynthesis of dothistromin (DOTH), a polyketide toxin very similar in structure to the aflatoxin precursor, versicolorin B. The first step of the pathway is the conversion of acetate to norsolorinic acid (NOR) and requires the fatty acid synthase subunits hexA and hexB, as well as the polyketide synthase pksA. PksA combines a hexanoyl starter unit and 7 malonyl-CoA extender units to synthesize the precursor NOR. The hexanoyl starter unit is provided to the acyl-carrier protein (ACP) domain by the fungal fatty acid synthase hexA/hexB. The second step is the conversion of NOR to averantin (AVN) and requires the norsolorinic acid ketoreductase nor1, which catalyzes the dehydration of norsolorinic acid to form (1'S)-averantin. The cytochrome P450 monooxygenase avnA then catalyzes the hydroxylation of AVN to 5'hydroxyaverantin (HAVN). The next step is performed by adhA that transforms HAVN to averufin (AVF). Averufin might then be converted to hydroxyversicolorone by cypX and avfA. Hydroxyversicolorone is further converted versiconal hemiacetal acetate (VHA) by moxY. VHA is then the substrate for the versiconal hemiacetal acetate esterase est1 to yield versiconal (VAL). Versicolorin B synthase vbsA then converts VAL to versicolorin B (VERB) by closing the bisfuran ring. Then, the activity of the versicolorin B desaturase verB leads to versicolorin A (VERA). DotB, a predicted chloroperoxidase, may perform epoxidation of the A-ring of VERA. Alternatively, a cytochrome P450, such as cypX or avnA could catalyze this step. It is also possible that another, uncharacterized, cytochrome P450 enzyme is responsible for this step. Opening of the epoxide could potentially be achieved by the epoxide hydrolase epoA. However, epoA seems not to be required for DOTH biosynthesis, but other epoxide hydrolases may have the ability to complement this hydrolysis. Alternatively, opening of the epoxide ring could be achieved non-enzymatically. The next step is the deoxygenation of ring A to yield the 5,8-dihydroxyanthraquinone which is most likely catalyzed by the NADPH dehydrogenase encoded by ver1. The last stages of DOTH biosynthesis are proposed to involve hydroxylation of the bisfuran. OrdB and norB might have oxidative roles here. An alternative possibility is that cytochrome P450 monoogenases such as avnA and cypX might perform these steps in addition to previously proposed steps. The polypeptide is Oxidoreductase ordB (Dothistroma septosporum (strain NZE10 / CBS 128990) (Red band needle blight fungus)).